The following is a 297-amino-acid chain: Nucleotide-binding protein Bphy_0322 (297 aa).

Residue 8 to 15 (GISGSGKS) coordinates ATP. Residue 57-60 (DARS) participates in GTP binding.

It belongs to the RapZ-like family.

Its function is as follows. Displays ATPase and GTPase activities. The protein is Nucleotide-binding protein Bphy_0322 of Paraburkholderia phymatum (strain DSM 17167 / CIP 108236 / LMG 21445 / STM815) (Burkholderia phymatum).